Reading from the N-terminus, the 338-residue chain is Ketol-acid reductoisomerase (NADP(+)) (338 aa).

Positions 1 to 181 (MKVYYDKDAD…GGGRTGIIET (181 aa)) constitute a KARI N-terminal Rossmann domain. NADP(+) is bound by residues 24-27 (YGSQ), arginine 47, serine 50, serine 52, and 82-85 (DEFQ). The active site involves histidine 107. Glycine 133 lines the NADP(+) pocket. In terms of domain architecture, KARI C-terminal knotted spans 182-327 (TFKDETETDL…AKLRSMMPWI (146 aa)). Mg(2+)-binding residues include aspartate 190, glutamate 194, glutamate 226, and glutamate 230. Serine 251 serves as a coordination point for substrate.

Belongs to the ketol-acid reductoisomerase family. Requires Mg(2+) as cofactor.

The enzyme catalyses (2R)-2,3-dihydroxy-3-methylbutanoate + NADP(+) = (2S)-2-acetolactate + NADPH + H(+). The catalysed reaction is (2R,3R)-2,3-dihydroxy-3-methylpentanoate + NADP(+) = (S)-2-ethyl-2-hydroxy-3-oxobutanoate + NADPH + H(+). It participates in amino-acid biosynthesis; L-isoleucine biosynthesis; L-isoleucine from 2-oxobutanoate: step 2/4. The protein operates within amino-acid biosynthesis; L-valine biosynthesis; L-valine from pyruvate: step 2/4. Involved in the biosynthesis of branched-chain amino acids (BCAA). Catalyzes an alkyl-migration followed by a ketol-acid reduction of (S)-2-acetolactate (S2AL) to yield (R)-2,3-dihydroxy-isovalerate. In the isomerase reaction, S2AL is rearranged via a Mg-dependent methyl migration to produce 3-hydroxy-3-methyl-2-ketobutyrate (HMKB). In the reductase reaction, this 2-ketoacid undergoes a metal-dependent reduction by NADPH to yield (R)-2,3-dihydroxy-isovalerate. The protein is Ketol-acid reductoisomerase (NADP(+)) of Thiobacillus denitrificans (strain ATCC 25259 / T1).